Reading from the N-terminus, the 411-residue chain is cAMP-dependent protein kinase regulatory subunit (411 aa).

A disordered region spans residues M1–T144. The segment at A23 to F159 is dimerization and phosphorylation. Low complexity predominate over residues S46–S58. Positions E85–P96 are enriched in acidic residues. The segment covering T119–W136 has biased composition (polar residues). At S120 the chain carries Phosphoserine. Residues L160–E289, E238, R247, L292–A411, E359, and R368 each bind 3',5'-cyclic AMP.

The protein belongs to the cAMP-dependent kinase regulatory chain family. Tetramer, composed of 2 regulatory (R) and 2 catalytic (C) subunits. In the presence of cAMP it dissociates into 2 active monomeric C subunits and an R dimer.

The chain is cAMP-dependent protein kinase regulatory subunit (pkaR) from Aspergillus niger.